Reading from the N-terminus, the 427-residue chain is Alpha/beta hydrolase gkaG (427 aa).

Asp-368 is an active-site residue.

Belongs to the AB hydrolase superfamily. In terms of assembly, homodimer.

It participates in mycotoxin biosynthesis. Alpha/beta hydrolase; part of the gene cluster that mediates the biosynthesis of GKK1032, fungal natural products containing a macrocyclic para-cyclophane connected to a decahydrofluorene ring system that show potent antitumor activities. Within the pathway, gkaG catalyzes the Knoevenagel condensation that affords the 3-pyrrolin-2-one ring, using as substrate the polyketide-tyrosyl acyl thioester product of gkaA. The pathway begins with the PKS-NRPS gkaA which, with the help of the trans-enoyl reductase gkaC, synthesizes the polyketide-tyrosyl acyl thioester product which can be reductively off-loaded by the terminal reductase (R) domain in gkaA. The alpha/beta hydrolase gkaG is then required to catalyze the subsequent Knoevenagel condensation that affords the 3-pyrrolin-2-one ring, whereas the three proteins gkaB, gkaX and gkaZ then function synergistically to form the cyclophane. The chain is Alpha/beta hydrolase gkaG from Penicillium citrinum.